A 223-amino-acid polypeptide reads, in one-letter code: 7-cyano-7-deazaguanine synthase (223 aa).

An ATP-binding site is contributed by 8-18; sequence MSGGMDSTLCA. C187, C195, C198, and C201 together coordinate Zn(2+).

The protein belongs to the QueC family. Zn(2+) is required as a cofactor.

The enzyme catalyses 7-carboxy-7-deazaguanine + NH4(+) + ATP = 7-cyano-7-deazaguanine + ADP + phosphate + H2O + H(+). It functions in the pathway purine metabolism; 7-cyano-7-deazaguanine biosynthesis. Catalyzes the ATP-dependent conversion of 7-carboxy-7-deazaguanine (CDG) to 7-cyano-7-deazaguanine (preQ(0)). The chain is 7-cyano-7-deazaguanine synthase from Campylobacter curvus (strain 525.92).